The sequence spans 113 residues: MKRYATMLSEFTGVVPSTFLSKLFLKCEINLSIGRVQDRKEPYRQAKSAVRLHGLNNTQYCTGRIRFAARSIPQSPLVPFRLFPQFPTPSVRQNLTTLHFDTREEDRALVSSG.

The protein resides in the mitochondrion. This is an uncharacterized protein from Arabidopsis thaliana (Mouse-ear cress).